Reading from the N-terminus, the 312-residue chain is Small ribosomal subunit protein uS2 (312 aa).

Belongs to the universal ribosomal protein uS2 family. Component of the small ribosomal subunit. Mature ribosomes consist of a small (40S) and a large (60S) subunit. The 40S subunit contains about 33 different proteins and 1 molecule of RNA (18S). The 60S subunit contains about 49 different proteins and 3 molecules of RNA (25S, 5.8S and 5S). Interacts with ribosomal protein S21.

The protein resides in the cytoplasm. In terms of biological role, required for the assembly and/or stability of the 40S ribosomal subunit. Required for the processing of the 20S rRNA-precursor to mature 18S rRNA in a late step of the maturation of 40S ribosomal subunits. This is Small ribosomal subunit protein uS2 from Vitis vinifera (Grape).